We begin with the raw amino-acid sequence, 329 residues long: RNA-binding protein CP33, chloroplastic (329 aa).

A chloroplast-targeting transit peptide spans M1–A69. Residues A77–E104 show a composition bias toward acidic residues. Disordered stretches follow at residues A77–R117 and S296–A329. 2 consecutive RRM domains span residues G116–V194 and H219–E297.

It is found in the plastid. The protein resides in the chloroplast. Functionally, could be involved in splicing and/or processing of chloroplast RNAs. This chain is RNA-binding protein CP33, chloroplastic, found in Arabidopsis thaliana (Mouse-ear cress).